The chain runs to 428 residues: 3-phosphoshikimate 1-carboxyvinyltransferase (428 aa).

Positions 20, 21, and 25 each coordinate 3-phosphoshikimate. K20 contributes to the phosphoenolpyruvate binding site. Phosphoenolpyruvate is bound by residues G92 and R120. 4 residues coordinate 3-phosphoshikimate: S166, Q168, D314, and K341. Residue Q168 coordinates phosphoenolpyruvate. D314 functions as the Proton acceptor in the catalytic mechanism. Positions 345 and 387 each coordinate phosphoenolpyruvate.

Belongs to the EPSP synthase family. As to quaternary structure, monomer.

The protein resides in the cytoplasm. The enzyme catalyses 3-phosphoshikimate + phosphoenolpyruvate = 5-O-(1-carboxyvinyl)-3-phosphoshikimate + phosphate. Its pathway is metabolic intermediate biosynthesis; chorismate biosynthesis; chorismate from D-erythrose 4-phosphate and phosphoenolpyruvate: step 6/7. Functionally, catalyzes the transfer of the enolpyruvyl moiety of phosphoenolpyruvate (PEP) to the 5-hydroxyl of shikimate-3-phosphate (S3P) to produce enolpyruvyl shikimate-3-phosphate and inorganic phosphate. This Listeria welshimeri serovar 6b (strain ATCC 35897 / DSM 20650 / CCUG 15529 / CIP 8149 / NCTC 11857 / SLCC 5334 / V8) protein is 3-phosphoshikimate 1-carboxyvinyltransferase.